Consider the following 301-residue polypeptide: Protoheme IX farnesyltransferase (301 aa).

9 helical membrane-spanning segments follow: residues Val29 to Val49, Ile51 to Phe71, Val96 to Val118, Leu123 to Leu143, Ile151 to Gly171, Ala177 to Ile197, Cys223 to Met243, Cys244 to Trp264, and Phe281 to Leu301.

The protein belongs to the UbiA prenyltransferase family. Protoheme IX farnesyltransferase subfamily.

Its subcellular location is the cell inner membrane. It carries out the reaction heme b + (2E,6E)-farnesyl diphosphate + H2O = Fe(II)-heme o + diphosphate. It participates in porphyrin-containing compound metabolism; heme O biosynthesis; heme O from protoheme: step 1/1. In terms of biological role, converts heme B (protoheme IX) to heme O by substitution of the vinyl group on carbon 2 of heme B porphyrin ring with a hydroxyethyl farnesyl side group. This chain is Protoheme IX farnesyltransferase, found in Shewanella halifaxensis (strain HAW-EB4).